The primary structure comprises 476 residues: Oogenesin-2 (476 aa).

The LRR 1; degenerate repeat unit spans residues 97–121 (RCKLREITLSHDLVVVWAGSHEVEG). The LRR 2; degenerate repeat unit spans residues 176-200 (HLHCRKLKIYGLTKAAVIEMFKIVH). The LRR 3; degenerate repeat unit spans residues 201–226 (AEYIEDLELSCLCLEYLDFLNPYLKQ). One copy of the LRR 4; degenerate repeat lies at 227–264 (MSNLLSLTLDEIIYTLNIDDYRNLNEEKVITVISHLPT). 4 LRR repeats span residues 265-285 (FHHL…LRCL), 286-317 (KKPL…FELR), 342-369 (RHTL…ALSQ), and 370-394 (CYQL…LLHH).

This sequence belongs to the PRAME family. In terms of tissue distribution, expressed in ovary, specifically in oocytes. Detected in follicles with two layers of granulosa cells, and are present in early as well as large antral follicles.

This chain is Oogenesin-2, found in Mus musculus (Mouse).